A 389-amino-acid polypeptide reads, in one-letter code: Aromatic-amino-acid aminotransferase 2 (389 aa).

Residue Lys-233 is modified to N6-(pyridoxal phosphate)lysine.

This sequence belongs to the class-I pyridoxal-phosphate-dependent aminotransferase family. As to quaternary structure, homodimer. It depends on pyridoxal 5'-phosphate as a cofactor.

The catalysed reaction is an aromatic L-alpha-amino acid + 2-oxoglutarate = an aromatic oxo-acid + L-glutamate. Its function is as follows. Catalyzes the transamination of phenylalanine, tyrosine and tryptophan. Shows virtually no activity towards aspartic acid, alanine, valine or isoleucine. The sequence is that of Aromatic-amino-acid aminotransferase 2 from Thermococcus litoralis (strain ATCC 51850 / DSM 5473 / JCM 8560 / NS-C).